Consider the following 355-residue polypeptide: Serine endoprotease DegS (355 aa).

Residues 1-4 (MFVK) are Cytoplasmic-facing. A helical transmembrane segment spans residues 5–27 (LLRSVAIGLIVGAILLVAMPSLR). The Periplasmic segment spans residues 28-355 (SLNPLSTPQF…VTIQEYPATN (328 aa)). Active-site charge relay system residues include histidine 96 and aspartate 126. A substrate-binding site is contributed by threonine 184. Serine 201 (charge relay system) is an active-site residue. A substrate-binding site is contributed by 259 to 264 (IGIGGR). The PDZ domain occupies 281-326 (GIVVNEVSPDGPAANAGIQVNDLIISVDNKPAISALETMDQVAEIR). Position 351 (tyrosine 351) interacts with substrate.

It belongs to the peptidase S1C family. Homotrimer.

The protein localises to the cell inner membrane. It carries out the reaction Acts on substrates that are at least partially unfolded. The cleavage site P1 residue is normally between a pair of hydrophobic residues, such as Val-|-Val.. With respect to regulation, allosterically activated by the C-terminus of exposed OMP peptides (consensus Tyr-X-Phe-COOH); cleavage only occurs in the presence of peptides. Inhibited when RseB is bound to RseA. A site-1 protease (S1P) that cleaves the peptide bond between 'Val-148' and 'Ser-149' in RseA. Part of a regulated intramembrane proteolysis (RIP) cascade. When heat shock or other environmental stresses disrupt protein folding in the periplasm, DegS senses the accumulation of unassembled outer membrane porins (OMP) and then initiates RseA (anti sigma-E factor) degradation by cleaving its periplasmic domain, making it a substrate for subsequent cleavage by RseP. This cascade ultimately leads to the sigma-E-driven expression of a variety of factors dealing with folding stress in the periplasm and OMP assembly. Required for basal and stress-induced degradation of RseA. This chain is Serine endoprotease DegS (degS), found in Escherichia coli O157:H7.